The sequence spans 287 residues: Diaminopimelate epimerase (287 aa).

Substrate is bound by residues N11, Q44, and N64. C73 acts as the Proton donor in catalysis. Residues 74 to 75 (GN), N157, N190, and 208 to 209 (ER) each bind substrate. C217 serves as the catalytic Proton acceptor. 218–219 (GT) lines the substrate pocket.

Belongs to the diaminopimelate epimerase family. In terms of assembly, homodimer.

It is found in the cytoplasm. The enzyme catalyses (2S,6S)-2,6-diaminopimelate = meso-2,6-diaminopimelate. It participates in amino-acid biosynthesis; L-lysine biosynthesis via DAP pathway; DL-2,6-diaminopimelate from LL-2,6-diaminopimelate: step 1/1. Its function is as follows. Catalyzes the stereoinversion of LL-2,6-diaminopimelate (L,L-DAP) to meso-diaminopimelate (meso-DAP), a precursor of L-lysine and an essential component of the bacterial peptidoglycan. This is Diaminopimelate epimerase from Halorhodospira halophila (strain DSM 244 / SL1) (Ectothiorhodospira halophila (strain DSM 244 / SL1)).